We begin with the raw amino-acid sequence, 278 residues long: Ribosomal RNA small subunit methyltransferase A (278 aa).

Positions 28, 30, 55, 77, 103, and 122 each coordinate S-adenosyl-L-methionine.

It belongs to the class I-like SAM-binding methyltransferase superfamily. rRNA adenine N(6)-methyltransferase family. RsmA subfamily.

It localises to the cytoplasm. The catalysed reaction is adenosine(1518)/adenosine(1519) in 16S rRNA + 4 S-adenosyl-L-methionine = N(6)-dimethyladenosine(1518)/N(6)-dimethyladenosine(1519) in 16S rRNA + 4 S-adenosyl-L-homocysteine + 4 H(+). Its function is as follows. Specifically dimethylates two adjacent adenosines (A1518 and A1519) in the loop of a conserved hairpin near the 3'-end of 16S rRNA in the 30S particle. May play a critical role in biogenesis of 30S subunits. The protein is Ribosomal RNA small subunit methyltransferase A of Cereibacter sphaeroides (strain ATCC 17023 / DSM 158 / JCM 6121 / CCUG 31486 / LMG 2827 / NBRC 12203 / NCIMB 8253 / ATH 2.4.1.) (Rhodobacter sphaeroides).